Here is a 390-residue protein sequence, read N- to C-terminus: MRTNTTATVLLAAAVALLLATAARGDGGDGGCGKEDAAAGRDRARARGLKIAAFFSILVCGALGCGLPSLGRHVPALRPDGDVFFLVKAFAAGVILATGFIHILPDAFDNLTDDCLPAGGPWKEFPFAGFGAMVGAIGTLVVDTLATGYFTRALSKKDAATAAAVADEEKQSAAATQQHNHHHNHHVVGDGGGGGEEHEGQVHVHTHATHGHAHGSSALVAAVGEDDKETTLRHRVISQVLELGIVVHSVIIGISLGASQNPETIKPLVVALSFHQMFEGMGLGGCIVQAKFKVRSIVTMVLFFCLTTPVGIAVGVGISSVYNESSPTALVVEGILNSVAAGILIYMALVDLLAEDFMNPRVQSKGKLQLGINLAMLAGAGLMSMLAKWA.

The N-terminal stretch at 1–25 is a signal peptide; it reads MRTNTTATVLLAAAVALLLATAARG. N4 carries an N-linked (GlcNAc...) asparagine glycan. The Extracellular segment spans residues 26 to 50; it reads DGGDGGCGKEDAAAGRDRARARGLK. Residues 51–71 traverse the membrane as a helical segment; the sequence is IAAFFSILVCGALGCGLPSLG. Residues 72-82 are Cytoplasmic-facing; it reads RHVPALRPDGD. A helical transmembrane segment spans residues 83-103; that stretch reads VFFLVKAFAAGVILATGFIHI. The Extracellular portion of the chain corresponds to 104–124; it reads LPDAFDNLTDDCLPAGGPWKE. N-linked (GlcNAc...) asparagine glycosylation occurs at N110. A helical membrane pass occupies residues 125–145; the sequence is FPFAGFGAMVGAIGTLVVDTL. Over 146-235 the chain is Cytoplasmic; sequence ATGYFTRALS…DDKETTLRHR (90 aa). Residues 165-199 form a disordered region; the sequence is VADEEKQSAAATQQHNHHHNHHVVGDGGGGGEEHE. Residues 236–256 traverse the membrane as a helical segment; sequence VISQVLELGIVVHSVIIGISL. The Extracellular portion of the chain corresponds to 257–267; sequence GASQNPETIKP. Residues 268–288 traverse the membrane as a helical segment; it reads LVVALSFHQMFEGMGLGGCIV. Topologically, residues 289-296 are cytoplasmic; the sequence is QAKFKVRS. A helical transmembrane segment spans residues 297–317; sequence IVTMVLFFCLTTPVGIAVGVG. The Extracellular segment spans residues 318-329; sequence ISSVYNESSPTA. N-linked (GlcNAc...) asparagine glycosylation occurs at N323. The chain crosses the membrane as a helical span at residues 330-350; it reads LVVEGILNSVAAGILIYMALV. Residues 351–369 are Cytoplasmic-facing; sequence DLLAEDFMNPRVQSKGKLQ. Residues 370 to 390 traverse the membrane as a helical segment; the sequence is LGINLAMLAGAGLMSMLAKWA.

The protein belongs to the ZIP transporter (TC 2.A.5) family.

Its subcellular location is the cell membrane. Functionally, zinc transporter that may mediate zinc uptake from the rhizosphere and may be responsible for the translocation of zinc within the plant. This chain is Zinc transporter 8 (ZIP8), found in Oryza sativa subsp. japonica (Rice).